The following is a 345-amino-acid chain: MPITPQQALQRTIEHREIFHDEMVDLMRQIMRGEVSDAMVSAILTGLRVKKETIGEIAGAATVMREFSRRVEVTDRCHMVDIVGTGGDGSHTFNISTCAMFVAAAGGAKVAKHGNRSVSSKSGSADALEALGAVIELQPEQVAASLAQTGIGFMYAPVHHPAMKVVAPVRREMGVRTIFNILGPLTNPACSPNILMGVFHPDLVGIQARVLQELGAERALVVWGRDGMDELSLGAGTLVGELRDGQVHEYEVHPEDFGIAMSASRNLKVADAAESRAMLLQVLDNVPGPALDIVALNAGAALYVAGVADSIADGIVRARQVLADGSARACLDAYVAFTQQATAQG.

5-phospho-alpha-D-ribose 1-diphosphate-binding positions include G84, 87 to 88, T92, 94 to 97, 112 to 120, and S124; these read GD, NIST, and KHGNRSVSS. Anthranilate is bound at residue G84. Position 96 (S96) interacts with Mg(2+). An anthranilate-binding site is contributed by N115. An anthranilate-binding site is contributed by R170. The Mg(2+) site is built by D229 and E230.

It belongs to the anthranilate phosphoribosyltransferase family. In terms of assembly, homodimer. Requires Mg(2+) as cofactor.

It carries out the reaction N-(5-phospho-beta-D-ribosyl)anthranilate + diphosphate = 5-phospho-alpha-D-ribose 1-diphosphate + anthranilate. It functions in the pathway amino-acid biosynthesis; L-tryptophan biosynthesis; L-tryptophan from chorismate: step 2/5. Its function is as follows. Catalyzes the transfer of the phosphoribosyl group of 5-phosphorylribose-1-pyrophosphate (PRPP) to anthranilate to yield N-(5'-phosphoribosyl)-anthranilate (PRA). This is Anthranilate phosphoribosyltransferase from Xanthomonas campestris pv. campestris (strain B100).